Consider the following 478-residue polypeptide: Alpha-(1,3)-fucosyltransferase FucT (478 aa).

Residues G94, 186–189, R195, 222–225, N240, and 246–250 contribute to the substrate site; these read VASN, VKNK, and YVTEK. Residues 347–353 form an important for acceptor specificity region; that stretch reads DNPFIFC. A run of 10 repeats spans residues 364-370, 371-377, 378-384, 385-391, 392-398, 399-405, 406-412, 413-419, 420-426, and 427-433. The 10 X 7 AA tandem repeat of D-D-L-R-[IV]-N-Y stretch occupies residues 364–433; that stretch reads DDLRVNYDDL…VNYDDLRVNY (70 aa). Residues 434-478 are may be involved in membrane binding; that stretch reads ERLLSKATPLLELSQNTTSKIYRKAYQKSLPLLRAIRRWVKKLGL.

It belongs to the glycosyltransferase 10 family. In terms of assembly, homodimer.

Its subcellular location is the membrane. The protein localises to the cytoplasm. It catalyses the reaction a beta-D-galactosyl-(1-&gt;4)-N-acetyl-beta-D-glucosaminyl derivative + GDP-beta-L-fucose = a beta-D-galactosyl-(1-&gt;4)-[alpha-L-fucosyl-(1-&gt;3)]-N-acetyl-beta-D-glucosaminyl derivative + GDP + H(+). The protein operates within lipopolysaccharide biosynthesis; LPS oligosaccharide biosynthesis. In terms of biological role, involved in the biosynthesis of the Lewis X (LeX) trisaccharide of the lipopolysaccharide (LPS) O-antigen. Catalyzes the addition of fucose in alpha 1-3 linkage to Gal-beta-1-4-GlcNAc-beta-O-R (LacNAc-R) type II acceptor. The polypeptide is Alpha-(1,3)-fucosyltransferase FucT (Helicobacter pylori (Campylobacter pylori)).